A 264-amino-acid chain; its full sequence is MKQYLDLLNRILTEGVHKEDRTGTGTISVFGHQMRFNLEEGFPLVTTKKLHLKSIIHELLWFLQGDTNVKYLQDNGVRIWNEWADANGDLGHIYGYQWRSWPDYNGGFIDQISEAIETIKHNPDSRRIIVSAWNVADLNNMNLPPCHAFFQFYVANGRLSLQLYQRSADTFLGVPFNIASYALLLQMVAQVTGLQTGDFVHTLGDTHIYTNHLEQVKLQLSREPRPLPQMKINPDIKDIFSFKYEDFELVNYDPWPHIAGKVSV.

Arg-21 lines the dUMP pocket. (6R)-5,10-methylene-5,6,7,8-tetrahydrofolate is bound at residue His-51. 126-127 (RR) contributes to the dUMP binding site. The Nucleophile role is filled by Cys-146. DUMP-binding positions include 166–169 (RSAD), Asn-177, and 207–209 (HIY). A (6R)-5,10-methylene-5,6,7,8-tetrahydrofolate-binding site is contributed by Asp-169. Residue Ser-263 coordinates (6R)-5,10-methylene-5,6,7,8-tetrahydrofolate.

It belongs to the thymidylate synthase family. Bacterial-type ThyA subfamily. As to quaternary structure, homodimer.

The protein resides in the cytoplasm. The catalysed reaction is dUMP + (6R)-5,10-methylene-5,6,7,8-tetrahydrofolate = 7,8-dihydrofolate + dTMP. The protein operates within pyrimidine metabolism; dTTP biosynthesis. Functionally, catalyzes the reductive methylation of 2'-deoxyuridine-5'-monophosphate (dUMP) to 2'-deoxythymidine-5'-monophosphate (dTMP) while utilizing 5,10-methylenetetrahydrofolate (mTHF) as the methyl donor and reductant in the reaction, yielding dihydrofolate (DHF) as a by-product. This enzymatic reaction provides an intracellular de novo source of dTMP, an essential precursor for DNA biosynthesis. This Phocaeicola vulgatus (strain ATCC 8482 / DSM 1447 / JCM 5826 / CCUG 4940 / NBRC 14291 / NCTC 11154) (Bacteroides vulgatus) protein is Thymidylate synthase.